The primary structure comprises 205 residues: Small ribosomal subunit protein uS4 (205 aa).

The S4 RNA-binding domain occupies 95-163 (RRLDNVVYRL…FKENLESRDP (69 aa)).

Belongs to the universal ribosomal protein uS4 family. Part of the 30S ribosomal subunit. Contacts protein S5. The interaction surface between S4 and S5 is involved in control of translational fidelity.

In terms of biological role, one of the primary rRNA binding proteins, it binds directly to 16S rRNA where it nucleates assembly of the body of the 30S subunit. Functionally, with S5 and S12 plays an important role in translational accuracy. The sequence is that of Small ribosomal subunit protein uS4 from Persephonella marina (strain DSM 14350 / EX-H1).